The following is a 1178-amino-acid chain: DNA-directed RNA polymerase subunit beta (1178 aa).

Residues 1-37 (MLEGCILPDFGQSKTDVSPSQSRPQSSPNNSVPGAPN) are disordered. Low complexity predominate over residues 17–33 (VSPSQSRPQSSPNNSVP).

This sequence belongs to the RNA polymerase beta chain family. As to quaternary structure, the RNAP catalytic core consists of 2 alpha, 1 beta, 1 beta' and 1 omega subunit. When a sigma factor is associated with the core the holoenzyme is formed, which can initiate transcription.

It catalyses the reaction RNA(n) + a ribonucleoside 5'-triphosphate = RNA(n+1) + diphosphate. Its function is as follows. DNA-dependent RNA polymerase catalyzes the transcription of DNA into RNA using the four ribonucleoside triphosphates as substrates. The sequence is that of DNA-directed RNA polymerase subunit beta from Mycobacterium leprae (strain Br4923).